The primary structure comprises 115 residues: Large ribosomal subunit protein bL20c (115 aa).

It belongs to the bacterial ribosomal protein bL20 family.

It localises to the plastid. The protein localises to the chloroplast. Functionally, binds directly to 23S ribosomal RNA and is necessary for the in vitro assembly process of the 50S ribosomal subunit. It is not involved in the protein synthesizing functions of that subunit. In Chlorokybus atmophyticus (Soil alga), this protein is Large ribosomal subunit protein bL20c.